Reading from the N-terminus, the 101-residue chain is Small ribosomal subunit protein uS14 (101 aa).

The protein belongs to the universal ribosomal protein uS14 family. In terms of assembly, part of the 30S ribosomal subunit. Contacts proteins S3 and S10.

Its function is as follows. Binds 16S rRNA, required for the assembly of 30S particles and may also be responsible for determining the conformation of the 16S rRNA at the A site. The protein is Small ribosomal subunit protein uS14 of Polaromonas naphthalenivorans (strain CJ2).